We begin with the raw amino-acid sequence, 360 residues long: Probable cinnamyl alcohol dehydrogenase 9 (360 aa).

Cysteine 50 is a binding site for Zn(2+). An NADP(+)-binding site is contributed by threonine 52. The Zn(2+) site is built by histidine 72, glutamate 73, cysteine 103, cysteine 106, cysteine 109, cysteine 117, and cysteine 166. NADP(+)-binding positions include threonine 170, 191–196 (GLGGLG), 214–219 (SSSSTK), threonine 254, glycine 278, and 301–303 (SDV).

It belongs to the zinc-containing alcohol dehydrogenase family. In terms of assembly, homodimer. It depends on Zn(2+) as a cofactor. As to expression, expressed in the vasculature of the primary root and elongation regions. Expressed in the hypocotyl, cotyledon veins, vasculature of the first rosette leaves, and hydathodes. In stems, expressed in the vascular cambium, interfascicular cambium, developing xylem, and phloem. Expressed in the entire floral organs at late developing stage, and in the abscission, style and stigmatic regions of siliques and seed funicules.

The enzyme catalyses (E)-cinnamyl alcohol + NADP(+) = (E)-cinnamaldehyde + NADPH + H(+). The protein operates within aromatic compound metabolism; phenylpropanoid biosynthesis. Functionally, involved in lignin biosynthesis. May catalyze the final step specific for the production of lignin monomers, like coniferyl alcohol, sinapyl alcohol and 4-coumaryl alcohol. This chain is Probable cinnamyl alcohol dehydrogenase 9 (CAD9), found in Arabidopsis thaliana (Mouse-ear cress).